The following is a 1347-amino-acid chain: MENLPFPLKLLSASSLNAPSSTPWVLDIFLTLVFALGFFFLLLPYLSYFRCDDPPSPSPGKRKCPVGRRRRPRGRMKNHSLRAGRECRRGLEETSDLLSQLQSLLGPHLDKGDFGQLSGPDPPGEVGERAPDGASQSSHEPMEDAAPILSPLASPDPQAKHPQDLASTPSPGPMTTSVSSLSASQPPEPSLPLEHPSPEPPALFPHPPHTPDPLACSLPPPKGFTAPPLRDSTLITPSHCDSVAFPLGTVPQSLSPHEDLVASVPAISGLGGSNSHVSASSRWQETARTSCAFNSSVQQDHLSRHPPETCQMEAGSLFLLSSDGQNVVGIQVTETAKVNIWEEKENVGSFTNRMTPEKHLNSLRNLAKSLDAEQDTTNPKPFWNMGENSKQLPGPQKLSDPRLWQESFWKNYSQLFWGLPSLHSESLVANAWVTDRSYTLQSPPFLFNEMSNVCPIQRETTMSPLLFQAQPLSHLGPECQPFISSTPQFRPTPMAQAEAQAHLQSSFPVLSPAFPSLIQNTGVACPASQNKVQALSLPETQHPEWPLLRRQLEGRLALPSRVQKSQDVFSVSTPNLPQESLTSILPENFPVSPELRRQLEQHIKKWIIQHWGNLGRIQESLDLMQLRDESPGTSQAKGKPSPWQSSMSTGEGSKEAQKVKFQLERDPCPHLGQILGETPQNLSRDMKSFPRKVLGVTSEELERNLRKPLRSDSGSDLLRCTERTHIENILKAHMGRNLGQTNEGLIPVCVRRSWLAVNQALPVSNTHVKTSNLAAPKSGKACVNTAQVLSFLEPCTQQGLGAHIVRFWAKHRWGLPLRVLKPIQCFKLEKVSSLSLTQLAGPSSATCESGAGSEVEVDMFLRKPPMASLRKQVLTKASDHMPESLLASSPAWKQFQRAPRGIPSWNDHEPLKPPPAGQEGRWPSKPLTYSLTGSIQQSRSLGAQSSKAGETREAVPQCRVPLETCMLANLQATSEDVHGFEAPGTSKSSLHPRVSVSQDPRKLCLMEEVVNEFEPGMATKSETQPQVCAAVVLLPDGQASVVPHASENLVSQVPQGHLQSMPTGNMRASQELHDLMAARRSKLVHEEPRNPNCQGSCKSQRPMFPPIHKSEKSRKPNLEKHEERLEGLRTPQLTPVRKTEDTHQDEGVQLLPSKKQPPSVSPFGENIKQIFQWIFSKKKSKPAPVTAESQKTVKNRSRVYSSSAEAQGLMTAVGQMLDEKMSLCHARHASKVNQHKQKFQAPVCGFPCNHRHLFYSEHGRILSYAASSQQATLKSQGCPNRDRQIRNQQPLKSVRCNNEQWGLRHPQILHPKKAVSPVSPPQHWPKTSGASSHHHHCPRHCLLWEGI.

A helical membrane pass occupies residues 23 to 43 (PWVLDIFLTLVFALGFFFLLL). Disordered stretches follow at residues 55–87 (PSPSPGKRKCPVGRRRRPRGRMKNHSLRAGREC), 106–233 (GPHL…RDST), 373–397 (EQDTTNPKPFWNMGENSKQLPGPQK), 628–657 (DESPGTSQAKGKPSPWQSSMSTGEGSKEAQ), 900–955 (RGIP…REAV), 1084–1161 (VHEE…PSVS), and 1313–1335 (KAVSPVSPPQHWPKTSGASSHHH). A compositionally biased stretch (basic residues) spans 60–82 (GKRKCPVGRRRRPRGRMKNHSLR). A compositionally biased stretch (polar residues) spans 165–178 (LASTPSPGPMTTSV). Over residues 198–211 (PEPPALFPHPPHTP) the composition is skewed to pro residues. 2 stretches are compositionally biased toward polar residues: residues 631-651 (PGTSQAKGKPSPWQSSMSTGE) and 927-948 (LTYSLTGSIQQSRSLGAQSSKA). 2 stretches are compositionally biased toward basic and acidic residues: residues 1108–1127 (HKSEKSRKPNLEKHEERLEG) and 1137–1146 (RKTEDTHQDE).

Belongs to the SPATA31 family.

The protein resides in the membrane. Its function is as follows. May play a role in spermatogenesis. The polypeptide is Spermatogenesis-associated protein 31A5 (SPATA31A5) (Homo sapiens (Human)).